Here is a 244-residue protein sequence, read N- to C-terminus: Leucyl/phenylalanyl-tRNA--protein transferase (244 aa).

Residues 1–22 (MHSQPYLLSPAPNNTPFPPAEH) form a disordered region.

This sequence belongs to the L/F-transferase family.

The protein localises to the cytoplasm. The catalysed reaction is N-terminal L-lysyl-[protein] + L-leucyl-tRNA(Leu) = N-terminal L-leucyl-L-lysyl-[protein] + tRNA(Leu) + H(+). It catalyses the reaction N-terminal L-arginyl-[protein] + L-leucyl-tRNA(Leu) = N-terminal L-leucyl-L-arginyl-[protein] + tRNA(Leu) + H(+). It carries out the reaction L-phenylalanyl-tRNA(Phe) + an N-terminal L-alpha-aminoacyl-[protein] = an N-terminal L-phenylalanyl-L-alpha-aminoacyl-[protein] + tRNA(Phe). Functions in the N-end rule pathway of protein degradation where it conjugates Leu, Phe and, less efficiently, Met from aminoacyl-tRNAs to the N-termini of proteins containing an N-terminal arginine or lysine. In Xylella fastidiosa (strain M12), this protein is Leucyl/phenylalanyl-tRNA--protein transferase.